The primary structure comprises 284 residues: Cystinosin homolog (284 aa).

7 consecutive transmembrane segments (helical) span residues 3-23, 37-57, 86-106, 116-136, 139-159, 181-201, and 216-236; these read ALSI…SLSF, IGLS…YSVF, IAFA…CFIY, LGIG…ILGF, VFTW…ITFI, NVLL…LDVA, and LGLS…HYIL. The 67-residue stretch at 4 to 70 folds into the PQ-loop 1 domain; sequence LSIISIIIGW…LYFDKLVKNE (67 aa). In terms of domain architecture, PQ-loop 2 spans 154–208; it reads LFITFIKYIPQAYLNFKNKSTSGWSVHNVLLDFSGGVLSLLQMFLDVADSGNWNI. Positions 247-269 are disordered; the sequence is NLNDNNIPNNNNNNNNNINNNTP.

The protein belongs to the cystinosin family.

It is found in the lysosome membrane. The enzyme catalyses L-cystine(out) + H(+)(out) = L-cystine(in) + H(+)(in). In terms of biological role, cystine/H(+) symporter that mediates export of cystine, the oxidized dimer of cysteine, from lysosomes. The protein is Cystinosin homolog (ctns) of Dictyostelium discoideum (Social amoeba).